The chain runs to 262 residues: Ribosomal RNA small subunit methyltransferase A (262 aa).

S-adenosyl-L-methionine is bound by residues His13, Leu15, Gly40, Glu61, Asp85, and Asn103.

This sequence belongs to the class I-like SAM-binding methyltransferase superfamily. rRNA adenine N(6)-methyltransferase family. RsmA subfamily.

It is found in the cytoplasm. The catalysed reaction is adenosine(1518)/adenosine(1519) in 16S rRNA + 4 S-adenosyl-L-methionine = N(6)-dimethyladenosine(1518)/N(6)-dimethyladenosine(1519) in 16S rRNA + 4 S-adenosyl-L-homocysteine + 4 H(+). Functionally, specifically dimethylates two adjacent adenosines (A1518 and A1519) in the loop of a conserved hairpin near the 3'-end of 16S rRNA in the 30S particle. May play a critical role in biogenesis of 30S subunits. This is Ribosomal RNA small subunit methyltransferase A from Bordetella avium (strain 197N).